Consider the following 115-residue polypeptide: U3-lycotoxin-Ls1a (115 aa).

An N-terminal signal peptide occupies residues 1–20 (MKFVLLFGVLLVTLFSYSSA). A propeptide spanning residues 21 to 44 (EMLDDFDQAVEDELLSLIEKEEAR) is cleaved from the precursor. Cystine bridges form between cysteine 48–cysteine 63, cysteine 55–cysteine 72, cysteine 62–cysteine 87, and cysteine 74–cysteine 85.

This sequence belongs to the neurotoxin 19 (CSTX) family. 01 subfamily. Expressed by the venom gland.

Its subcellular location is the secreted. The chain is U3-lycotoxin-Ls1a from Lycosa singoriensis (Wolf spider).